The sequence spans 163 residues: Globin CTT-Z (163 aa).

An N-terminal signal peptide occupies residues 1 to 16 (MKFFAVLALCIVGAIA). In terms of domain architecture, Globin spans 18–162 (PLTSDEAALV…VYTAVFQIVT (145 aa)). Heme b-binding residues include H76 and H111.

The protein belongs to the globin family.

The sequence is that of Globin CTT-Z (CTT-Z) from Chironomus thummi thummi (Midge).